The sequence spans 190 residues: ATP synthase subunit delta (190 aa).

The protein belongs to the ATPase delta chain family. In terms of assembly, F-type ATPases have 2 components, F(1) - the catalytic core - and F(0) - the membrane proton channel. F(1) has five subunits: alpha(3), beta(3), gamma(1), delta(1), epsilon(1). F(0) has three main subunits: a(1), b(2) and c(10-14). The alpha and beta chains form an alternating ring which encloses part of the gamma chain. F(1) is attached to F(0) by a central stalk formed by the gamma and epsilon chains, while a peripheral stalk is formed by the delta and b chains.

Its subcellular location is the cell inner membrane. F(1)F(0) ATP synthase produces ATP from ADP in the presence of a proton or sodium gradient. F-type ATPases consist of two structural domains, F(1) containing the extramembraneous catalytic core and F(0) containing the membrane proton channel, linked together by a central stalk and a peripheral stalk. During catalysis, ATP synthesis in the catalytic domain of F(1) is coupled via a rotary mechanism of the central stalk subunits to proton translocation. In terms of biological role, this protein is part of the stalk that links CF(0) to CF(1). It either transmits conformational changes from CF(0) to CF(1) or is implicated in proton conduction. The polypeptide is ATP synthase subunit delta (Methylobacterium nodulans (strain LMG 21967 / CNCM I-2342 / ORS 2060)).